A 227-amino-acid polypeptide reads, in one-letter code: 7-cyano-7-deazaguanine synthase (227 aa).

8–18 (LSGGTDSATVL) contributes to the ATP binding site. 4 residues coordinate Zn(2+): C192, C202, C205, and C208.

Belongs to the QueC family. Requires Zn(2+) as cofactor.

The enzyme catalyses 7-carboxy-7-deazaguanine + NH4(+) + ATP = 7-cyano-7-deazaguanine + ADP + phosphate + H2O + H(+). It functions in the pathway purine metabolism; 7-cyano-7-deazaguanine biosynthesis. Catalyzes the ATP-dependent conversion of 7-carboxy-7-deazaguanine (CDG) to 7-cyano-7-deazaguanine (preQ(0)). The protein is 7-cyano-7-deazaguanine synthase of Rickettsia prowazekii (strain Madrid E).